The chain runs to 89 residues: Dynein light chain 1, cytoplasmic (89 aa).

The protein belongs to the dynein light chain family. Interacts with spn-F. Forms ternary complexes with spn-F and IKKepsilon. Ubiquitous.

The protein localises to the cytoplasm. It localises to the cytoskeleton. Its function is as follows. Acts as a non-catalytic accessory component of a dynein complex. In Drosophila melanogaster (Fruit fly), this protein is Dynein light chain 1, cytoplasmic (ctp).